The following is a 358-amino-acid chain: Peptide chain release factor 1 (358 aa).

Position 233 is an N5-methylglutamine (Gln-233).

This sequence belongs to the prokaryotic/mitochondrial release factor family. In terms of processing, methylated by PrmC. Methylation increases the termination efficiency of RF1.

The protein localises to the cytoplasm. Functionally, peptide chain release factor 1 directs the termination of translation in response to the peptide chain termination codons UAG and UAA. This is Peptide chain release factor 1 from Staphylococcus haemolyticus (strain JCSC1435).